The chain runs to 1170 residues: DNA-directed RNA polymerase subunit beta' (1170 aa).

Positions 60, 62, 75, and 78 each coordinate Zn(2+). 3 residues coordinate Mg(2+): D449, D451, and D453. Zn(2+) is bound by residues C774, C848, C855, and C858. The interval 1145–1170 is disordered; sequence EPGEENGEPGGERLYGMDELYGETAN.

The protein belongs to the RNA polymerase beta' chain family. The RNAP catalytic core consists of 2 alpha, 1 beta, 1 beta' and 1 omega subunit. When a sigma factor is associated with the core the holoenzyme is formed, which can initiate transcription. Requires Mg(2+) as cofactor. Zn(2+) is required as a cofactor.

It catalyses the reaction RNA(n) + a ribonucleoside 5'-triphosphate = RNA(n+1) + diphosphate. In terms of biological role, DNA-dependent RNA polymerase catalyzes the transcription of DNA into RNA using the four ribonucleoside triphosphates as substrates. This Pelotomaculum thermopropionicum (strain DSM 13744 / JCM 10971 / SI) protein is DNA-directed RNA polymerase subunit beta'.